The primary structure comprises 597 residues: Probable translation initiation factor IF-2 (597 aa).

The tr-type G domain maps to 4–221; it reads IRQPIIAVLG…LIAGLSQKYL (218 aa). The tract at residues 13–20 is G1; it reads GHVDHGKT. Position 13–20 (13–20) interacts with GTP; that stretch reads GHVDHGKT. Residues 38 to 42 are G2; the sequence is GITQH. The interval 77–80 is G3; that stretch reads DTPG. Residues 77–81 and 131–134 contribute to the GTP site; these read DTPGH and NKID. Residues 131-134 form a G4 region; sequence NKID. A G5 region spans residues 199–201; it reads SAK.

This sequence belongs to the TRAFAC class translation factor GTPase superfamily. Classic translation factor GTPase family. IF-2 subfamily.

Function in general translation initiation by promoting the binding of the formylmethionine-tRNA to ribosomes. Seems to function along with eIF-2. The sequence is that of Probable translation initiation factor IF-2 from Thermococcus onnurineus (strain NA1).